The chain runs to 228 residues: Ribonuclease 3 (228 aa).

One can recognise an RNase III domain in the interval leucine 5–glycine 128. Mg(2+) is bound at residue glutamate 41. The active site involves aspartate 45. Aspartate 114 and glutamate 117 together coordinate Mg(2+). Glutamate 117 is a catalytic residue. The region spanning aspartate 155–glutamine 225 is the DRBM domain.

Belongs to the ribonuclease III family. As to quaternary structure, homodimer. The cofactor is Mg(2+).

It localises to the cytoplasm. It catalyses the reaction Endonucleolytic cleavage to 5'-phosphomonoester.. Digests double-stranded RNA. Involved in the processing of primary rRNA transcript to yield the immediate precursors to the large and small rRNAs (23S and 16S). Processes some mRNAs, and tRNAs when they are encoded in the rRNA operon. Processes pre-crRNA and tracrRNA of type II CRISPR loci if present in the organism. The sequence is that of Ribonuclease 3 from Alcanivorax borkumensis (strain ATCC 700651 / DSM 11573 / NCIMB 13689 / SK2).